The following is a 164-amino-acid chain: RNA pyrophosphohydrolase (164 aa).

The Nudix hydrolase domain occupies 12–158 (RYRQCAGVML…KREVYRAVVK (147 aa)). The Nudix box motif lies at 47 to 68 (GGIDPGETQQEAAMRELEEETG).

Belongs to the Nudix hydrolase family. RppH subfamily. The cofactor is a divalent metal cation.

Functionally, accelerates the degradation of transcripts by removing pyrophosphate from the 5'-end of triphosphorylated RNA, leading to a more labile monophosphorylated state that can stimulate subsequent ribonuclease cleavage. This is RNA pyrophosphohydrolase from Erythrobacter litoralis (strain HTCC2594).